The following is a 923-amino-acid chain: Periplasmic nitrate reductase (923 aa).

Residues 1 to 30 constitute a signal peptide (tat-type signal); it reads MNRRDFIKNTAIASAASVAGLSVPSSMLGA. The 4Fe-4S Mo/W bis-MGD-type domain occupies 34 to 90; sequence WKWDKAVCRFCGTGCGIMIARKDGKIVATKGDPAAPVNRGLNCIKGYFNAKIMYGED. [4Fe-4S] cluster is bound by residues Cys-41, Cys-44, Cys-48, and Cys-76. Residues Lys-78, Gln-146, Asn-171, Cys-175, 208-215, Met-416, Gln-420, Asn-526, 551-552, Lys-574, Asp-601, and 813-822 each bind Mo-bis(molybdopterin guanine dinucleotide); these read WGANMAEM, SD, and TGRVLEHWHS. A substrate-binding site is contributed by Trp-889. Mo-bis(molybdopterin guanine dinucleotide)-binding residues include Asn-897 and Lys-914.

The protein belongs to the prokaryotic molybdopterin-containing oxidoreductase family. NasA/NapA/NarB subfamily. In terms of assembly, component of the periplasmic nitrate reductase NapAB complex composed of NapA and NapB. [4Fe-4S] cluster is required as a cofactor. Mo-bis(molybdopterin guanine dinucleotide) serves as cofactor. Post-translationally, predicted to be exported by the Tat system. The position of the signal peptide cleavage has not been experimentally proven.

The protein resides in the periplasm. The catalysed reaction is 2 Fe(II)-[cytochrome] + nitrate + 2 H(+) = 2 Fe(III)-[cytochrome] + nitrite + H2O. Catalytic subunit of the periplasmic nitrate reductase complex NapAB. Receives electrons from NapB and catalyzes the reduction of nitrate to nitrite. In Campylobacter jejuni subsp. jejuni serotype O:23/36 (strain 81-176), this protein is Periplasmic nitrate reductase.